The following is a 106-amino-acid chain: Replication restart protein PriB (106 aa).

The 100-residue stretch at 4 to 103 (TNRLVLSGTV…LHAEQIEFID (100 aa)) folds into the SSB domain.

The protein belongs to the PriB family. In terms of assembly, homodimer. Interacts with PriA and DnaT. Component of the replication restart primosome. Primosome assembly occurs via a 'hand-off' mechanism. PriA binds to replication forks, subsequently PriB then DnaT bind; DnaT then displaces ssDNA to generate the helicase loading substrate.

Functionally, involved in the restart of stalled replication forks, which reloads the replicative helicase on sites other than the origin of replication; the PriA-PriB pathway is the major replication restart pathway. During primosome assembly it facilitates complex formation between PriA and DnaT on DNA; stabilizes PriA on DNA. Stimulates the DNA unwinding activity of PriA helicase. In Yersinia pestis, this protein is Replication restart protein PriB.